A 483-amino-acid polypeptide reads, in one-letter code: Deoxyribodipyrimidine photo-lyase (483 aa).

The Photolyase/cryptochrome alpha/beta domain maps to 2-136 (QKNLIWFRND…LVKGFHDNLL (135 aa)). The (6R)-5,10-methylene-5,6,7,8-tetrahydrofolate site is built by N109 and E110. An FAD-binding site is contributed by Y225. R229 is a DNA binding site. Residue 237–241 (TSMLS) participates in FAD binding. Interaction with DNA regions lie at residues 278-285 (QILWREFY) and 345-346 (NR). An FAD-binding site is contributed by 376–378 (DGD). Q408 is a DNA binding site.

Belongs to the DNA photolyase class-1 family. Monomer. Requires FAD as cofactor. (6R)-5,10-methylene-5,6,7,8-tetrahydrofolate serves as cofactor.

It carries out the reaction cyclobutadipyrimidine (in DNA) = 2 pyrimidine residues (in DNA).. Involved in repair of UV radiation-induced DNA damage. Catalyzes the light-dependent monomerization (300-600 nm) of cyclobutyl pyrimidine dimers (in cis-syn configuration), which are formed between adjacent bases on the same DNA strand upon exposure to ultraviolet radiation. The polypeptide is Deoxyribodipyrimidine photo-lyase (phrB) (Buchnera aphidicola subsp. Acyrthosiphon pisum (strain APS) (Acyrthosiphon pisum symbiotic bacterium)).